The primary structure comprises 317 residues: Transaldolase (317 aa).

The active-site Schiff-base intermediate with substrate is Lys-126.

This sequence belongs to the transaldolase family. Type 1 subfamily. In terms of assembly, homodimer.

It localises to the cytoplasm. It catalyses the reaction D-sedoheptulose 7-phosphate + D-glyceraldehyde 3-phosphate = D-erythrose 4-phosphate + beta-D-fructose 6-phosphate. Its pathway is carbohydrate degradation; pentose phosphate pathway; D-glyceraldehyde 3-phosphate and beta-D-fructose 6-phosphate from D-ribose 5-phosphate and D-xylulose 5-phosphate (non-oxidative stage): step 2/3. Its function is as follows. Transaldolase is important for the balance of metabolites in the pentose-phosphate pathway. This Burkholderia vietnamiensis (strain G4 / LMG 22486) (Burkholderia cepacia (strain R1808)) protein is Transaldolase.